A 493-amino-acid polypeptide reads, in one-letter code: Cardiolipin synthase 1 (493 aa).

Helical transmembrane passes span phenylalanine 13–phenylalanine 33 and tryptophan 45–phenylalanine 65. PLD phosphodiesterase domains are found at residues methionine 228–tyrosine 255 and glutamate 406–serine 433. Catalysis depends on residues histidine 233, lysine 235, aspartate 240, histidine 411, lysine 413, and aspartate 418.

The protein belongs to the phospholipase D family. Cardiolipin synthase subfamily.

Its subcellular location is the cell membrane. The enzyme catalyses 2 a 1,2-diacyl-sn-glycero-3-phospho-(1'-sn-glycerol) = a cardiolipin + glycerol. In terms of biological role, catalyzes the reversible phosphatidyl group transfer from one phosphatidylglycerol molecule to another to form cardiolipin (CL) (diphosphatidylglycerol) and glycerol. This is Cardiolipin synthase 1 (cls1) from Staphylococcus aureus (strain MRSA252).